The following is a 590-amino-acid chain: Proline--tRNA ligase (590 aa).

The protein belongs to the class-II aminoacyl-tRNA synthetase family. ProS type 1 subfamily. Homodimer.

The protein resides in the cytoplasm. The catalysed reaction is tRNA(Pro) + L-proline + ATP = L-prolyl-tRNA(Pro) + AMP + diphosphate. Functionally, catalyzes the attachment of proline to tRNA(Pro) in a two-step reaction: proline is first activated by ATP to form Pro-AMP and then transferred to the acceptor end of tRNA(Pro). As ProRS can inadvertently accommodate and process non-cognate amino acids such as alanine and cysteine, to avoid such errors it has two additional distinct editing activities against alanine. One activity is designated as 'pretransfer' editing and involves the tRNA(Pro)-independent hydrolysis of activated Ala-AMP. The other activity is designated 'posttransfer' editing and involves deacylation of mischarged Ala-tRNA(Pro). The misacylated Cys-tRNA(Pro) is not edited by ProRS. In Clavibacter sepedonicus (Clavibacter michiganensis subsp. sepedonicus), this protein is Proline--tRNA ligase.